We begin with the raw amino-acid sequence, 328 residues long: Probable nicotianamine synthase 6 (328 aa).

Belongs to the nicotianamine synthase (NAS)-like family.

It catalyses the reaction 3 S-adenosyl-L-methionine = nicotianamine + 3 S-methyl-5'-thioadenosine + 3 H(+). Functionally, synthesizes nicotianamine, a polyamine that is the first intermediate in the synthesis of the phytosiderophores of the mugineic acid type found in gramineae which serves as a sensor for the physiological iron status within the plant, and/or might be involved in the transport of iron. This Hordeum vulgare (Barley) protein is Probable nicotianamine synthase 6 (NAS6).